Here is a 561-residue protein sequence, read N- to C-terminus: uncharacterized protein (561 aa).

A signal peptide spans 1–24; it reads MELGAWRSILYIAFLFAITRHAFC. Over 25 to 509 the chain is Lumenal; it reads KAVNLVHSPE…GYVYLSEIKQ (485 aa). Residues 510-530 form a helical membrane-spanning segment; sequence YSSLILISLWISLILFVSFLN. Topologically, residues 531–561 are cytoplasmic; it reads RRLILHYSFESVHQLKTLTRKFIYSSLLKQD.

It is found in the endoplasmic reticulum membrane. The protein localises to the golgi apparatus membrane. This is an uncharacterized protein from Schizosaccharomyces pombe (strain 972 / ATCC 24843) (Fission yeast).